The following is a 352-amino-acid chain: Phenylalanine--tRNA ligase alpha subunit (352 aa).

Residue Glu258 coordinates Mg(2+).

Belongs to the class-II aminoacyl-tRNA synthetase family. Phe-tRNA synthetase alpha subunit type 1 subfamily. In terms of assembly, tetramer of two alpha and two beta subunits. Mg(2+) serves as cofactor.

It localises to the cytoplasm. The catalysed reaction is tRNA(Phe) + L-phenylalanine + ATP = L-phenylalanyl-tRNA(Phe) + AMP + diphosphate + H(+). The sequence is that of Phenylalanine--tRNA ligase alpha subunit from Staphylococcus haemolyticus (strain JCSC1435).